A 110-amino-acid chain; its full sequence is Protein RALF-like 4 (110 aa).

An N-terminal signal peptide occupies residues 1–23; it reads MGVKMLLIFGLLILAMVAKSVNA. Positions 24 to 58 are cleaved as a propeptide — removed in mature form; that stretch reads TYPLTKSCINGQGCIGEDDELESLMDSETNRRQLA. Intrachain disulfides connect cysteine 76–cysteine 86 and cysteine 99–cysteine 105.

The protein belongs to the plant rapid alkalinization factor (RALF) family. Post-translationally, proteolytically cleaved, probably by S1P, a subtilisin-like serine protease (subtilase).

The protein localises to the secreted. Functionally, cell signaling peptide that may regulate plant stress, growth, and development. Mediates a rapid alkalinization of extracellular space by mediating a transient increase in the cytoplasmic Ca(2+) concentration leading to a calcium-dependent signaling events through a cell surface receptor and a concomitant activation of some intracellular mitogen-activated protein kinases. This is Protein RALF-like 4 (RALFL4) from Arabidopsis thaliana (Mouse-ear cress).